The following is a 114-amino-acid chain: Small ribosomal subunit protein eS25 (114 aa).

The tract at residues 1–33 (MAPKKDKAPPPSSKPAKSGGKQKKKKWSKGKQK) is disordered. Residues 20-30 (GKQKKKKWSKG) show a composition bias toward basic residues.

This sequence belongs to the eukaryotic ribosomal protein eS25 family.

The chain is Small ribosomal subunit protein eS25 (RPS25) from Amaranthus cruentus (Purple amaranth).